A 158-amino-acid polypeptide reads, in one-letter code: MFDGIGFMELLLIGVLGLVVLGPERLPVAVRSVTGWIRAMKRMANSVKEELEQELKIEQLHADLKKAESKGLSNLSPELKESIEQLKQAAQSVNRPYQVQDSSSQGTAAPDNQIHSPAQVSQTNPTTPLETSQHLTSPAAHNEPSQGVDTSSNPKANG.

Residues 2-22 (FDGIGFMELLLIGVLGLVVLG) traverse the membrane as a helical segment. A disordered region spans residues 86–158 (LKQAAQSVNR…DTSSNPKANG (73 aa)). Composition is skewed to polar residues over residues 88–107 (QAAQ…SQGT), 113–136 (QIHS…QHLT), and 143–158 (EPSQ…KANG).

It belongs to the TatB family. In terms of assembly, the Tat system comprises two distinct complexes: a TatABC complex, containing multiple copies of TatA, TatB and TatC subunits, and a separate TatA complex, containing only TatA subunits. Substrates initially bind to the TatABC complex, which probably triggers association of the separate TatA complex to form the active translocon.

It is found in the cell inner membrane. In terms of biological role, part of the twin-arginine translocation (Tat) system that transports large folded proteins containing a characteristic twin-arginine motif in their signal peptide across membranes. Together with TatC, TatB is part of a receptor directly interacting with Tat signal peptides. TatB may form an oligomeric binding site that transiently accommodates folded Tat precursor proteins before their translocation. The polypeptide is Sec-independent protein translocase protein TatB (Shewanella putrefaciens (strain CN-32 / ATCC BAA-453)).